Consider the following 353-residue polypeptide: Histidinol-phosphate aminotransferase (353 aa).

Lys-214 carries the post-translational modification N6-(pyridoxal phosphate)lysine.

This sequence belongs to the class-II pyridoxal-phosphate-dependent aminotransferase family. Histidinol-phosphate aminotransferase subfamily. Homodimer. The cofactor is pyridoxal 5'-phosphate.

The enzyme catalyses L-histidinol phosphate + 2-oxoglutarate = 3-(imidazol-4-yl)-2-oxopropyl phosphate + L-glutamate. It participates in amino-acid biosynthesis; L-histidine biosynthesis; L-histidine from 5-phospho-alpha-D-ribose 1-diphosphate: step 7/9. The protein is Histidinol-phosphate aminotransferase of Gloeobacter violaceus (strain ATCC 29082 / PCC 7421).